We begin with the raw amino-acid sequence, 512 residues long: MEEFPGYFELDRSRQHDFLYPLIFRESIYALAHDHGLNRNRSTLFENEVDYDKKYSLIIVKRLITRMYQRNHLIISANGSVQNPFWGHNQNLYSKILSEGFAVIVEIPFSLRVLSSFERKEKDIAKSPTLRSIHSIFPFLEDQFSHLDYLSHVLIPYPIHLEIAVQTLRYWVKDASSLHLLRIFLHEYWNSFSTPKKHITLFLKGNSRFFLFLYNSYVCEYESIFLFIRNQSSHFQSTSSGVFFERILFYVKIDHLVEVFVGTDFLDIRSFFKDPNMHYVRYQGKSILASKDTPLLMNKWKYYLVNLWQYHFSVWSQPGRININQLGKYSLDFLGYFSNVQLKSSVVRNQTLENSFLINNAMKKLETTVPILPLIGSLSRAKFCNALGHPISKPTRNDSSDSDIIDRFVRICRNLSHYHSGSSKKKSLYRIKYILRLSCVKTLARKHKSSVRAFLKRLGSELGDEFLTEEGVVLAVIFPKASGRLYRGRIWYLDIPCINDRVGDAEGSIFTK.

This sequence belongs to the intron maturase 2 family. MatK subfamily.

The protein resides in the plastid. It is found in the chloroplast. Functionally, usually encoded in the trnK tRNA gene intron. Probably assists in splicing its own and other chloroplast group II introns. The sequence is that of Maturase K from Oenothera biennis (German evening primrose).